We begin with the raw amino-acid sequence, 327 residues long: Interleukin-12 subunit beta (327 aa).

A signal peptide spans 1-22 (MCHQKLTISWFAVVLLASPLMA). Positions 23–106 (IWELEKDVYV…LSHSRLLLHK (84 aa)) constitute an Ig-like C2-type domain. The cysteines at positions 50 and 90 are disulfide-linked. N-linked (GlcNAc...) asparagine glycosylation is found at Asn-125, Asn-135, Asn-223, and Asn-315. Residues 238 to 327 (PPKNLQLKPL…WSRWVSVPCS (90 aa)) enclose the Fibronectin type-III domain.

This sequence belongs to the IL-12B family. Heterodimer with IL12A; disulfide-linked. The heterodimer is known as interleukin IL-12. Heterodimer with IL23A; disulfide-linked. The heterodimer is known as interleukin IL-23. Also secreted as a monomer. Interacts with NBR1; this interaction promotes IL-12 secretion.

Its subcellular location is the secreted. Its function is as follows. Cytokine that can act as a growth factor for activated T and NK cells, enhance the lytic activity of NK/lymphokine-activated killer cells, and stimulate the production of IFN-gamma by resting PBMC. In terms of biological role, associates with IL23A to form the IL-23 interleukin, a heterodimeric cytokine which functions in innate and adaptive immunity. IL-23 may constitute with IL-17 an acute response to infection in peripheral tissues. IL-23 binds to a heterodimeric receptor complex composed of IL12RB1 and IL23R, activates the Jak-Stat signaling cascade, stimulates memory rather than naive T-cells and promotes production of pro-inflammatory cytokines. IL-23 induces autoimmune inflammation and thus may be responsible for autoimmune inflammatory diseases and may be important for tumorigenesis. In Mesocricetus auratus (Golden hamster), this protein is Interleukin-12 subunit beta (IL12B).